Reading from the N-terminus, the 312-residue chain is Small ribosomal subunit protein uS2 (312 aa).

This sequence belongs to the universal ribosomal protein uS2 family. In terms of assembly, component of the small ribosomal subunit. Mature ribosomes consist of a small (40S) and a large (60S) subunit. The 40S subunit contains about 33 different proteins and 1 molecule of RNA (18S). The 60S subunit contains about 49 different proteins and 3 molecules of RNA (25S, 5.8S and 5S). Interacts with ribosomal protein S21.

The protein resides in the cytoplasm. Required for the assembly and/or stability of the 40S ribosomal subunit. Required for the processing of the 20S rRNA-precursor to mature 18S rRNA in a late step of the maturation of 40S ribosomal subunits. This is Small ribosomal subunit protein uS2 from Vitis vinifera (Grape).